The following is a 227-amino-acid chain: Guanylate kinase (227 aa).

The Guanylate kinase-like domain maps to 21-199 (GNLFMVVAPS…ALAELECIVA (179 aa)). 28-35 (APSGAGKS) contacts ATP.

It belongs to the guanylate kinase family.

Its subcellular location is the cytoplasm. It carries out the reaction GMP + ATP = GDP + ADP. Its function is as follows. Essential for recycling GMP and indirectly, cGMP. The polypeptide is Guanylate kinase (Burkholderia mallei (strain ATCC 23344)).